Here is a 279-residue protein sequence, read N- to C-terminus: 30 kDa ribonucleoprotein, chloroplastic (279 aa).

Residues 87 to 165 (LKIFVGNLLF…RALRVNSGPP (79 aa)) form the RRM 1 domain. The interval 156–187 (RALRVNSGPPPEKRENSSFRENSSFRGGSRGG) is disordered. A linker (Gly-rich) region spans residues 166–193 (PEKRENSSFRENSSFRGGSRGGGSFDSS). In terms of domain architecture, RRM 2 spans 194 to 272 (NRVYVGNLAW…RAIRVSPAEA (79 aa)).

Expressed at high levels in the leaves and seedlings, and lower levels are seen in the stems and roots.

Its subcellular location is the plastid. The protein resides in the chloroplast. Its function is as follows. Could be involved in splicing and/or processing of chloroplast RNA's. The polypeptide is 30 kDa ribonucleoprotein, chloroplastic (Nicotiana plumbaginifolia (Leadwort-leaved tobacco)).